Consider the following 85-residue polypeptide: Kappa-theraphotoxin-Gr1a (85 aa).

The signal sequence occupies residues 1-21 (MKTSVFAAILGLALFAVLCSG). Positions 22-49 (SELQEKDLKETLLSAIMETALEAQPEER) are excised as a propeptide. 3 disulfide bridges follow: Cys51-Cys65, Cys58-Cys70, and Cys64-Cys77. Residues 53–55 (YLF) are involved in active face.

The protein belongs to the neurotoxin 10 (Hwtx-1) family. 09 (HaTx) subfamily. In terms of tissue distribution, expressed by the venom gland.

The protein localises to the secreted. Functionally, inhibits Kv2.1/KCNB1 and Kv4.2/KCND2 voltage-gated potassium channels. Acts as a gating modifier by shifting channel openings to more depolarized voltages and acts via the occupancy of multiple binding sites on the channel. The toxin binding sites are situated on the S3-S4 extracellular linker of the channel. At least two hanatoxin molecules can occupy the Kv2.1/KCNB1 channel, and maybe more (three or four). Can also inhibit calcium channels (Cav2.1/CACNA1A). Needs to partition into the membrane in order to bind to the channel. The sequence is that of Kappa-theraphotoxin-Gr1a from Grammostola rosea (Chilean rose tarantula).